The chain runs to 790 residues: Mitochondrial intermediate peptidase (790 aa).

The N-terminal 29 residues, 1 to 29 (MLKRLARNNSSPWICSRCLQQSQRQRRFN), are a transit peptide targeting the mitochondrion. Zn(2+) is bound at residue His-570. Residue Glu-571 is part of the active site. Zn(2+)-binding residues include His-574 and His-577.

It belongs to the peptidase M3 family. Requires Zn(2+) as cofactor.

Its subcellular location is the mitochondrion matrix. The catalysed reaction is Release of an N-terminal octapeptide as second stage of processing of some proteins imported into the mitochondrion.. Functionally, cleaves proteins, imported into the mitochondrion, to their mature size. While most mitochondrial precursor proteins are processed to the mature form in one step by mitochondrial processing peptidase (MPP), the sequential cleavage by MIP of an octapeptide after initial processing by MPP is a required step for a subgroup of nuclear-encoded precursor proteins destined for the matrix or the inner membrane. The protein is Mitochondrial intermediate peptidase (OCT1) of Phaeosphaeria nodorum (strain SN15 / ATCC MYA-4574 / FGSC 10173) (Glume blotch fungus).